A 582-amino-acid chain; its full sequence is Formate--tetrahydrofolate ligase (582 aa).

An ATP-binding site is contributed by threonine 65–threonine 72.

Belongs to the formate--tetrahydrofolate ligase family.

It carries out the reaction (6S)-5,6,7,8-tetrahydrofolate + formate + ATP = (6R)-10-formyltetrahydrofolate + ADP + phosphate. The protein operates within one-carbon metabolism; tetrahydrofolate interconversion. The polypeptide is Formate--tetrahydrofolate ligase (Vibrio parahaemolyticus serotype O3:K6 (strain RIMD 2210633)).